The primary structure comprises 227 residues: uncharacterized protein (227 aa).

The N-terminal stretch at 1–23 (MKKLTVTFLTFISIFFAATAAFA) is a signal peptide.

This is an uncharacterized protein from Coxiella burnetii (strain RSA 493 / Nine Mile phase I).